The sequence spans 413 residues: L-arginine-specific L-amino acid ligase (413 aa).

In terms of domain architecture, ATP-grasp spans 115–312 (KTKLKMEGIP…LWESSLNISV (198 aa)). Residue 141–202 (GEKLGWPIIV…EKCIEMEEFH (62 aa)) participates in ATP binding. Mg(2+)-binding residues include glutamate 268 and glutamate 281. Residues glutamate 268 and glutamate 281 each contribute to the Mn(2+) site.

In terms of assembly, homodimer. Requires Mg(2+) as cofactor. It depends on Mn(2+) as a cofactor. The cofactor is Co(2+).

The enzyme catalyses an L-alpha-amino acid + L-arginine + ATP = L-arginyl-L-alpha-amino acid + ADP + phosphate + H(+). In terms of biological role, catalyzes the synthesis of Arg-Xaa dipeptides in an ATP-dependent manner. Has strict specificity toward arginine as the N-terminal substrate. The chain is L-arginine-specific L-amino acid ligase from Bacillus subtilis.